The following is a 357-amino-acid chain: 4-hydroxy-3-methylbut-2-en-1-yl diphosphate synthase (flavodoxin) (357 aa).

Residues Cys264, Cys267, Cys299, and Glu306 each coordinate [4Fe-4S] cluster.

This sequence belongs to the IspG family. The cofactor is [4Fe-4S] cluster.

The enzyme catalyses (2E)-4-hydroxy-3-methylbut-2-enyl diphosphate + oxidized [flavodoxin] + H2O + 2 H(+) = 2-C-methyl-D-erythritol 2,4-cyclic diphosphate + reduced [flavodoxin]. It participates in isoprenoid biosynthesis; isopentenyl diphosphate biosynthesis via DXP pathway; isopentenyl diphosphate from 1-deoxy-D-xylulose 5-phosphate: step 5/6. In terms of biological role, converts 2C-methyl-D-erythritol 2,4-cyclodiphosphate (ME-2,4cPP) into 1-hydroxy-2-methyl-2-(E)-butenyl 4-diphosphate. The polypeptide is 4-hydroxy-3-methylbut-2-en-1-yl diphosphate synthase (flavodoxin) (Campylobacter jejuni subsp. jejuni serotype O:6 (strain 81116 / NCTC 11828)).